Reading from the N-terminus, the 406-residue chain is Phosphopentomutase (406 aa).

The Mn(2+) site is built by D10, D305, H310, D346, H347, and H358.

The protein belongs to the phosphopentomutase family. Mn(2+) serves as cofactor.

It localises to the cytoplasm. It catalyses the reaction 2-deoxy-alpha-D-ribose 1-phosphate = 2-deoxy-D-ribose 5-phosphate. The enzyme catalyses alpha-D-ribose 1-phosphate = D-ribose 5-phosphate. It functions in the pathway carbohydrate degradation; 2-deoxy-D-ribose 1-phosphate degradation; D-glyceraldehyde 3-phosphate and acetaldehyde from 2-deoxy-alpha-D-ribose 1-phosphate: step 1/2. Isomerase that catalyzes the conversion of deoxy-ribose 1-phosphate (dRib-1-P) and ribose 1-phosphate (Rib-1-P) to deoxy-ribose 5-phosphate (dRib-5-P) and ribose 5-phosphate (Rib-5-P), respectively. This chain is Phosphopentomutase, found in Sinorhizobium medicae (strain WSM419) (Ensifer medicae).